We begin with the raw amino-acid sequence, 1085 residues long: MNDKALRTEALSVGLEPPSFKDLLIPIPNSGTKKKNKKKKKPKAKKNVETQANVDLLGSAGTDSAVTDVGANNGVIDHQASLELSNLNSRISHPQLVSANGDDSSLINVEGISSTDWQFTLESDDTIEHSPQCILSTSSFVDEAEFPVHIPGLEDATSSNMSPNSVQNNMNLNTVALGSSTSSKRKKKKKKKSKANSASLNVDDQRDFEQVYSTDVAITYRNGQALSYYNGSVRQASMNNNVNNNKSKDIWSSSNTEEREQIREFWLSLSESERRSLVKVEKEAVLQKMKEQQKYSCSCSVCGRKRLAIEEELEVLYDAYYEELEQYANIQRNLANTESVNASDEGSDKSQKGIISDSPKLLSIPLNNVPSKSLNDDITQDELNSSNADVDEEVIETTSLEEKNVDNQEFVTSISNGNQTLEDTSHSPQTQPPFQPPYPSKADEKNSYHSDLYNFGSSLTVKGGILTVADDLLKNDGKKFIEMMEQLAERRMQREDNSNFHEPELYESGLEYDEDEEEDEEDVDEDELDLMTDEQRMEEGRRMFQIFAARLFEQRVLQAYREKVAQQRQAKLLEEIEEENKRKQERELKKIREKEKKRDKKKQLKLAKEEERQRREAERLAEQAAQKALEAKRQEEARKKREEQRLKREQEKKQQELERQKREEKQKQKEREKKLKKQQQEADREKMAREQRLREEEEKRILEERKRREKLDKEEEERRRRELLEKESEEKERRLREAKIAAFFAPNQTKEGSDGCTTSSQLGLFEKKGDLVNDEDKLSSHLLDSVPNALRQAPIGLKNTNNLSERNASSNLLNSSLFSSFNSVNPLISLEPNPLNRTLNNSVNLTDFGRKPNGLHSPSSLLSNSNNFGLNPNARHSLSRANSPVHHYPFATPPSQRANKYPLNNGANVPALLNSFSSPQLSPLVNRVLNEPSSSPLSSSSLKSPLSKEGVLNQQGHEQYNFSLSPSIRNKLSPICRPSQGSSPKLKNNLSNTEERMGSRALLDDKTDSVITASNSTTSGLSRDESSNPNNYELLNAFNQNTWKISRSTSNKSLIPESPWGVALGAFTPNASTQSIPWGNRTWTD.

8 disordered regions span residues 22 to 52, 176 to 200, 418 to 446, 492 to 526, 577 to 731, 877 to 900, 927 to 950, and 971 to 996; these read DLLI…ETQA, ALGS…SASL, NQTL…DEKN, MQRE…VDED, EEEN…SEEK, SLSR…RANK, RVLN…SKEG, and KLSP…TEER. Basic residues-rich tracts occupy residues 32–45 and 183–194; these read TKKK…PKAK and SKRKKKKKKKSK. Pro residues predominate over residues 430–439; it reads TQPPFQPPYP. Positions 492 to 504 are enriched in basic and acidic residues; the sequence is MQREDNSNFHEPE. The span at 510-526 shows a compositional bias: acidic residues; sequence LEYDEDEEEDEEDVDED. Residues 561 to 744 are a coiled coil; that stretch reads REKVAQQRQA…LREAKIAAFF (184 aa). Basic and acidic residues-rich tracts occupy residues 577–596, 606–621, and 629–731; these read EEEN…EKEK, LAKE…ERLA, and LEAK…SEEK. Position 883 is a phosphoserine (Ser883). Positions 932 to 948 are enriched in low complexity; that stretch reads PSSSPLSSSSLKSPLSK. Over residues 979-992 the composition is skewed to polar residues; it reads SQGSSPKLKNNLSN.

The protein belongs to the NST1 family.

The protein localises to the cytoplasm. In terms of biological role, may act as a negative regulator of salt tolerance. The sequence is that of Stress response protein nst1 (nst1) from Schizosaccharomyces pombe (strain 972 / ATCC 24843) (Fission yeast).